We begin with the raw amino-acid sequence, 265 residues long: Undecaprenyl-diphosphatase (265 aa).

The next 7 helical transmembrane spans lie at 41–61 (IAYT…LIYF), 75–95 (LKFL…LYVI), 104–124 (YNPS…GIYI), 137–157 (LSTK…LPGV), 180–200 (YSYL…LLFT), 215–235 (GIAL…GFLL), and 244–264 (YLID…GLII).

This sequence belongs to the UppP family.

The protein resides in the cell membrane. It carries out the reaction di-trans,octa-cis-undecaprenyl diphosphate + H2O = di-trans,octa-cis-undecaprenyl phosphate + phosphate + H(+). Catalyzes the dephosphorylation of undecaprenyl diphosphate (UPP). This is Undecaprenyl-diphosphatase from Saccharolobus islandicus (strain Y.G.57.14 / Yellowstone #1) (Sulfolobus islandicus).